A 1331-amino-acid polypeptide reads, in one-letter code: Serine/threonine-protein kinase SSK22 (1331 aa).

The 277-residue stretch at 1034–1310 (WQKRSFIGGG…AVELLIDPWM (277 aa)) folds into the Protein kinase domain. Residues 1040 to 1048 (IGGGTFGQV) and K1063 contribute to the ATP site. D1158 acts as the Proton acceptor in catalysis.

It belongs to the protein kinase superfamily. STE Ser/Thr protein kinase family. MAP kinase kinase kinase subfamily. As to quaternary structure, interacts with by SSK1.

The catalysed reaction is L-seryl-[protein] + ATP = O-phospho-L-seryl-[protein] + ADP + H(+). The enzyme catalyses L-threonyl-[protein] + ATP = O-phospho-L-threonyl-[protein] + ADP + H(+). In terms of biological role, kinase involved in a signal transduction pathway that is activated by changes in the osmolarity of the extracellular environment. Activates the PBS2 MAP kinase kinase by phosphorylation. This is Serine/threonine-protein kinase SSK22 (SSK22) from Saccharomyces cerevisiae (strain ATCC 204508 / S288c) (Baker's yeast).